The following is a 298-amino-acid chain: Ribosomal protein L11 methyltransferase (298 aa).

Residues Thr139, Gly163, Asp185, and Asn232 each coordinate S-adenosyl-L-methionine.

The protein belongs to the methyltransferase superfamily. PrmA family.

Its subcellular location is the cytoplasm. The enzyme catalyses L-lysyl-[protein] + 3 S-adenosyl-L-methionine = N(6),N(6),N(6)-trimethyl-L-lysyl-[protein] + 3 S-adenosyl-L-homocysteine + 3 H(+). In terms of biological role, methylates ribosomal protein L11. The chain is Ribosomal protein L11 methyltransferase from Microcystis aeruginosa (strain NIES-843 / IAM M-2473).